A 299-amino-acid polypeptide reads, in one-letter code: MAANSTRRPIIAFMSDLGTTDDSVAQCKGLMYSICPDVTVVDVCHSMTPWDVEEGARYIVDLPRFFPEGTVFATTTYPATGTTTRSVAVRIKQAAKGGARGQWAGSGAGFERAEGSYIYIAPNNGLLTTVLEEHGYLEAYEVTSPKVIPEQPEPTFYSREMVAIPSAHLAAGFPLSEVGRPLEDHEIVRFNRPAVEQDGEALVGVVSAIDHPFGNVWTNIHRTDLEKAGIGYGARLRLTLDGVLPFEAPLTPTFADAGEIGNIAIYLNSRGYLSIARNAASLAYPYHLKEGMSARVEAR.

S-adenosyl-L-methionine-binding positions include aspartate 16, 21-23, tyrosine 77, serine 158, aspartate 210, asparagine 215, 269-270, and 277-279; these read DDS, SR, and RNA.

Homohexamer; dimers of trimer.

It carries out the reaction fluoride + S-adenosyl-L-methionine = 5'-deoxy-5'-fluoroadenosine + L-methionine. With respect to regulation, competitively inhibited by S-adenosyl-L-homocysteine (AdoHcy) and S-adenosyl-L-homocysteine (SAH). Sinefungin is only weakly inhibitory. Functionally, involved in the biosynthesis of fluorometabolites. Catalyzes the formation of a C-F bond by combining S-adenosyl-L-methionine (SAM) and fluoride to generate 5'-fluoro-5'-deoxyadenosine (5'-FDA) and L-methionine. It can also use 2'-deoxyadenosine in place of adenosine as substrate. This Streptantibioticus cattleyicolor (Streptomyces cattleya) protein is Fluorinase.